The primary structure comprises 125 residues: MARLAGVDLPREKRLEVALTYIYGVGKTRAHKTLAETGISPDVRVKDLSDAELVQLRDYIEVNYKVEGDLRREVAADIRRKVEIGSYEGIRHRRGLPVRGQRTKTNARTRKGPKRTVAGKKKAGR.

The interval 93–125 (RRGLPVRGQRTKTNARTRKGPKRTVAGKKKAGR) is disordered.

It belongs to the universal ribosomal protein uS13 family. Part of the 30S ribosomal subunit. Forms a loose heterodimer with protein S19. Forms two bridges to the 50S subunit in the 70S ribosome.

Functionally, located at the top of the head of the 30S subunit, it contacts several helices of the 16S rRNA. In the 70S ribosome it contacts the 23S rRNA (bridge B1a) and protein L5 of the 50S subunit (bridge B1b), connecting the 2 subunits; these bridges are implicated in subunit movement. Contacts the tRNAs in the A and P-sites. The protein is Small ribosomal subunit protein uS13 of Renibacterium salmoninarum (strain ATCC 33209 / DSM 20767 / JCM 11484 / NBRC 15589 / NCIMB 2235).